A 528-amino-acid polypeptide reads, in one-letter code: Major facilitator-type transporter psiT2 (528 aa).

A disordered region spans residues 1-20 (MSPERSASLEPDEHSSLLSD). 5 helical membrane passes run 87 to 107 (FYSGLIESVFACGEVCSIFML), 125 to 145 (LGVALFTALFGLSTSFTMMLV), 148 to 168 (VCAGLLAGATPIVHSVVSELT), 174 to 194 (ALVVPLYGLITPIGFAIGPLI), and 220 to 240 (FLPSFVPCCLAVVGVTFGYFF). The segment covering 260–270 (STSSISSRTST) has biased composition (low complexity). The interval 260–299 (STSSISSRTSTLYGATDDHNRDASESTALSPEEAEDEIDS) is disordered. A run of 6 helical transmembrane segments spans residues 322–342 (FLMFLYTSSDVLFSLYCFTAV), 357–377 (AFSVAGVIAMLMQLCITPWVL), 388–408 (FCMFSFPLVFALMGCLNPLAQ), 424–444 (GLLYAAIAVLLLLARVCVMAF), 460–479 (LATANGLVQVSMTIARALCP), and 493–513 (NILGGHLWVLIMVTISLAGVW).

This sequence belongs to the major facilitator superfamily. TCR/Tet family.

It is found in the membrane. Major facilitator-type transporter; part of the gene cluster that mediates the biosynthesis of psilocybin, a psychotropic tryptamine-derived natural product. This Psilocybe cyanescens protein is Major facilitator-type transporter psiT2.